A 93-amino-acid polypeptide reads, in one-letter code: Small ribosomal subunit protein uS15 (93 aa).

The protein belongs to the universal ribosomal protein uS15 family. In terms of assembly, part of the 30S ribosomal subunit. Forms a bridge to the 50S subunit in the 70S ribosome, contacting the 23S rRNA.

One of the primary rRNA binding proteins, it binds directly to 16S rRNA where it helps nucleate assembly of the platform of the 30S subunit by binding and bridging several RNA helices of the 16S rRNA. Functionally, forms an intersubunit bridge (bridge B4) with the 23S rRNA of the 50S subunit in the ribosome. In Ehrlichia chaffeensis (strain ATCC CRL-10679 / Arkansas), this protein is Small ribosomal subunit protein uS15.